We begin with the raw amino-acid sequence, 364 residues long: WAT1-related protein At5g47470 (364 aa).

The next 10 helical transmembrane spans lie at 28-48 (MVIV…SLLM), 59-79 (FTIV…FAIL), 93-113 (LIGK…SLFL), 124-144 (ATAM…IVGL), 158-178 (ILGT…HSTS), 197-217 (VVGC…VVLQ), 228-248 (ISLS…VLLL), 255-275 (VLAS…LAGA), 293-313 (PVFV…FAVL), and 319-339 (VSLG…LVLW). Residues 40–172 (VYAGNSLLMS…LCVFGALAMS (133 aa)) enclose the EamA 1 domain. The 120-residue stretch at 219-338 (STLAEFPAPI…LMFVGLYLVL (120 aa)) folds into the EamA 2 domain.

This sequence belongs to the drug/metabolite transporter (DMT) superfamily. Plant drug/metabolite exporter (P-DME) (TC 2.A.7.4) family.

The protein localises to the membrane. The sequence is that of WAT1-related protein At5g47470 from Arabidopsis thaliana (Mouse-ear cress).